Consider the following 163-residue polypeptide: 3-isopropylmalate dehydratase small subunit (163 aa).

This sequence belongs to the LeuD family. LeuD type 2 subfamily. In terms of assembly, heterodimer of LeuC and LeuD.

It catalyses the reaction (2R,3S)-3-isopropylmalate = (2S)-2-isopropylmalate. It functions in the pathway amino-acid biosynthesis; L-leucine biosynthesis; L-leucine from 3-methyl-2-oxobutanoate: step 2/4. Functionally, catalyzes the isomerization between 2-isopropylmalate and 3-isopropylmalate, via the formation of 2-isopropylmaleate. This Clostridioides difficile (strain 630) (Peptoclostridium difficile) protein is 3-isopropylmalate dehydratase small subunit.